The sequence spans 307 residues: Aspartate carbamoyltransferase catalytic subunit (307 aa).

Arginine 49 and threonine 50 together coordinate carbamoyl phosphate. An L-aspartate-binding site is contributed by lysine 77. Carbamoyl phosphate-binding residues include arginine 99, histidine 127, and glutamine 130. Residues arginine 160 and arginine 211 each coordinate L-aspartate. Carbamoyl phosphate is bound by residues alanine 250 and proline 251.

It belongs to the aspartate/ornithine carbamoyltransferase superfamily. ATCase family. As to quaternary structure, heterododecamer (2C3:3R2) of six catalytic PyrB chains organized as two trimers (C3), and six regulatory PyrI chains organized as three dimers (R2).

The enzyme catalyses carbamoyl phosphate + L-aspartate = N-carbamoyl-L-aspartate + phosphate + H(+). It functions in the pathway pyrimidine metabolism; UMP biosynthesis via de novo pathway; (S)-dihydroorotate from bicarbonate: step 2/3. Its function is as follows. Catalyzes the condensation of carbamoyl phosphate and aspartate to form carbamoyl aspartate and inorganic phosphate, the committed step in the de novo pyrimidine nucleotide biosynthesis pathway. This is Aspartate carbamoyltransferase catalytic subunit from Bacillus pumilus (strain SAFR-032).